The chain runs to 2499 residues: Polyprotein P1234 (2499 aa).

The Alphavirus-like MT domain maps to 30–260 (VAQQVTPNDH…ENRADLQSWH (231 aa)). Positions 245–264 (GSTLYPENRADLQSWHLPSV) are nsP1 membrane-binding. A lipid anchor (S-palmitoyl cysteine; by host) is attached at Cys420. The 156-residue stretch at 694–849 (ELTNPPYHEL…RDLCTSTHYK (156 aa)) folds into the (+)RNA virus helicase ATP-binding domain. 725–732 (GTPGSGKS) contacts a ribonucleoside 5'-triphosphate. The region spanning 850 to 998 (YISRRCTQPV…LEEWQAEHED (149 aa)) is the (+)RNA virus helicase C-terminal domain. Residues 1011–1339 (DPFASKVNTC…LAVSNIFDNY (329 aa)) enclose the Peptidase C9 domain. A nucleolus localization signal region spans residues 1012 to 1031 (PFASKVNTCWAKAIIPILRT). Cys1020 serves as the catalytic For cysteine protease nsP2 activity. Residues 1065–1074 (TKMFGMDLSS) carry the Nuclear export signal motif. His1097 functions as the For cysteine protease nsP2 activity in the catalytic mechanism. The Nuclear localization signal signature appears at 1194–1198 (VSKRI). The Macro domain occupies 1346–1505 (APSYRVKRMN…RIADAIRMRE (160 aa)). Residues Asn1369, Gly1377, Gly1457, Ile1458, and Tyr1459 each contribute to the ADP-D-ribose site. The Zn(2+) site is built by Cys1608, Cys1610, Cys1633, and Cys1651. Short sequence motifs (FGDF; binding to host G3BP1) lie at residues 1845-1848 (FGDF) and 1865-1868 (FGDF). Positions 2253 to 2368 (HPVLETDIGS…HGVVSDKIMA (116 aa)) constitute a RdRp catalytic domain.

Interacts with non-structural protein 3. Interacts with RNA-directed RNA polymerase nsP4. Interacts with protease nsP2. interacts with itself. In terms of assembly, interacts with mRNA-capping enzyme nsP1. Interacts with host DDX1. Interacts with host DDX3. Interacts (via C-terminus) with host G3BP1; this interaction inhibits the formation of host stress granules on viral mRNAs and the nsp3-G3BP1 complexes bind viral RNAs and probably orchestrate the assembly of viral replication complexes. Interacts (via C-terminus) with host G3BP2; this interaction inhibits the formation of host stress granules on viral mRNAs and the nsp3-G3BP2 complexes bind viral RNAs and probably orchestrate the assembly of viral replication complexes. As to quaternary structure, interacts with mRNA-capping enzyme nsP1. Interacts with protease nsP2. interacts with itself. Interacts with RNA-directed RNA polymerase nsP4. Interacts with mRNA-capping enzyme nsP1. Interacts with KPNA1/karyopherin-alpha1; this interaction probably allows the active transport of protease nsP2 into the host nucleus. The cofactor is Mg(2+). Mn(2+) serves as cofactor. Specific enzymatic cleavages in vivo yield mature proteins. The processing of the polyprotein is temporally regulated. In early stages (1.7 hpi), P1234 is first cleaved in trans through its nsP2 protease activity, releasing P123' and nsP4, which associate to form the early replication complex. At the same time, P1234 is also cut at the nsP1/nsP2 site early in infection but with lower efficiency. After replication of the viral minus-strand RNAs (4 hpi), the polyproteins are cut at the nsP1/nsP2 and nsP2/nsP3 sites very efficiently, preventing accumulation of P123' and P1234 and allowing the formation of the late replication complex. NsP3'/nsP4 site is not cleaved anymore and P34 is produced rather than nsP4. In terms of processing, specific enzymatic cleavages in vivo yield mature proteins. The processing of the polyprotein is temporally regulated. In early stages (1.7 hpi), P123 is cleaved at the nsP1/nsP2 site with low efficiency. After replication of the viral minus-strand RNAs (4 hpi), the polyproteins are cut at the nsP1/nsP2 and nsP2/nsP3 sites very efficiently, preventing accumulation of P123 and allowing the formation of the late replication complex. Post-translationally, specific enzymatic cleavages in vivo yield mature proteins. The processing of the polyprotein is temporally regulated. In early stages (1.7 hpi), P123' is cleaved at the nsP1/nsP2 site with low efficiency. After replication of the viral minus-strand RNAs (4 hpi), the polyproteins are cut at the nsP1/nsP2 and nsP2/nsP3 sites very efficiently, preventing accumulation of P123' and allowing the formation of the late replication complex. Palmitoylated by host palmitoyltransferases ZDHHC2 and ZDHHC19. In terms of processing, phosphorylated by host on serines and threonines. Post-translationally, ubiquitinated; targets the protein for rapid degradation via the ubiquitin system. Nsp4 is present in extremely low quantities due to low frequency of translation through the amber stop-codon and the degradation by the ubiquitin pathway.

The protein localises to the host cytoplasmic vesicle membrane. The protein resides in the host cell membrane. It localises to the host cell projection. Its subcellular location is the host filopodium. It is found in the host nucleus. The protein localises to the host cytoplasm. The catalysed reaction is GTP + S-adenosyl-L-methionine = N(7)-methyl-GTP + S-adenosyl-L-homocysteine. It catalyses the reaction N(7)-methyl-GTP + L-histidyl-[protein] = N(tele)-(N(7)-methylguanosine 5'-phospho)-L-histidyl-[protein] + diphosphate. The enzyme catalyses N(tele)-(N(7)-methylguanosine 5'-phospho)-L-histidyl-[protein] + a 5'-end diphospho-(purine-ribonucleoside) in mRNA + H(+) = a 5'-end (N(7)-methyl 5'-triphosphoguanosine)-(purine-ribonucleoside) in mRNA + L-histidyl-[protein]. It carries out the reaction a 5'-end triphospho-ribonucleoside in mRNA + H2O = a 5'-end diphospho-ribonucleoside in mRNA + phosphate + H(+). The catalysed reaction is a ribonucleoside 5'-triphosphate + H2O = a ribonucleoside 5'-diphosphate + phosphate + H(+). It catalyses the reaction ATP + H2O = ADP + phosphate + H(+). The enzyme catalyses RNA(n) + a ribonucleoside 5'-triphosphate = RNA(n+1) + diphosphate. It carries out the reaction RNA(n) + ATP = RNA(n)-3'-adenine ribonucleotide + diphosphate. The catalysed reaction is 4-O-(ADP-D-ribosyl)-L-aspartyl-[protein] + H2O = L-aspartyl-[protein] + ADP-D-ribose + H(+). It catalyses the reaction 5-O-(ADP-D-ribosyl)-L-glutamyl-[protein] + H2O = L-glutamyl-[protein] + ADP-D-ribose + H(+). The enzyme catalyses ADP-alpha-D-ribose 1''-phosphate + H2O = ADP-D-ribose + phosphate. Functionally, inactive precursor of the viral replicase, which is activated by cleavages carried out by the viral protease nsP2. Its function is as follows. The early replication complex formed by the polyprotein P123 and nsP4 synthesizes minus-strand RNAs. As soon P123 is cleaved into mature proteins, the plus-strand RNAs synthesis begins. In terms of biological role, the early replication complex formed by the polyprotein P123' and nsP4 synthesizes minus-strand RNAs. Polyprotein P123' is a short-lived polyprotein that accumulates during early stage of infection. As soon P123' is cleaved into mature proteins, the plus-strand RNAs synthesis begins. Cytoplasmic capping enzyme that catalyzes two virus-specific reactions: methyltransferase and nsP1 guanylyltransferase. mRNA-capping is necessary since all viral RNAs are synthesized in the cytoplasm, and host capping enzymes are restricted to the nucleus. The enzymatic reaction involves a covalent link between 7-methyl-GMP and nsP1, whereas eukaryotic capping enzymes form a covalent complex only with GMP. nsP1 capping consists in the following reactions: GTP is first methylated into 7-methyl-GMP and then is covalently linked to nsP1 to form the m7GMp-nsP1 complex from which 7-methyl-GMP complex is transferred to the mRNA to create the cap structure. NsP1 is needed for the initiation of the minus-strand RNAs synthesis. Probably serves as a membrane anchor for the replication complex composed of nsP1-nsP4. Palmitoylated nsP1 is remodeling host cell cytoskeleton, and induces filopodium-like structure formation at the surface of the host cell. Functionally, multifunctional protein whose N-terminus is part of the RNA polymerase complex and displays NTPase, RNA triphosphatase and helicase activities. NTPase and RNA triphosphatase are involved in viral RNA capping and helicase keeps a check on the dsRNA replication intermediates. The C-terminus harbors a protease that specifically cleaves the polyproteins and releases the mature proteins. Required for the shutoff of minus-strand RNAs synthesis. Specifically inhibits the host IFN response by promoting the nuclear export of host STAT1. Also inhibits host transcription by inducing rapid proteasome-dependent degradation of POLR2A, a catalytic subunit of the RNAPII complex. The resulting inhibition of cellular protein synthesis serves to ensure maximal viral gene expression and to evade host immune response. Its function is as follows. Seems to be essential for minus-strand RNAs and subgenomic 26S mRNAs synthesis. Displays mono-ADP-ribosylhydrolase activity. ADP-ribosylation is a post-translational modification that controls various processes of the host cell and the virus probably needs to revert it for optimal viral replication. Binds proteins of FXR family and sequesters them into the viral RNA replication complexes thereby inhibiting the formation of host stress granules on viral mRNAs. The nsp3'-FXR complexes bind viral RNAs and probably orchestrate the assembly of viral replication complexes, thanks to the ability of FXR family members to self-assemble and bind DNA. In terms of biological role, seems to be essential for minus-strand RNAs and subgenomic 26S mRNAs synthesis. Displays mono-ADP-ribosylhydrolase activity. ADP-ribosylation is a post-translantional modification that controls various processes of the host cell and the virus probably needs to revert it for optimal viral replication. Binds proteins of G3BP family and sequesters them into the viral RNA replication complexes thereby inhibiting the formation of host stress granules on viral mRNAs. The nsp3-G3BP complexes bind viral RNAs and probably orchestrate the assembly of viral replication complexes, thanks to the ability of G3BP family members to self-assemble and bind DNA. RNA dependent RNA polymerase. Replicates genomic and antigenomic RNA by recognizing replications specific signals. The early replication complex formed by the polyprotein P123 and nsP4 synthesizes minus-strand RNAs. The late replication complex composed of fully processed nsP1-nsP4 is responsible for the production of genomic and subgenomic plus-strand RNAs. The core catalytic domain of nsP4 also possesses terminal adenylyltransferase (TATase) activity that is probably involved in maintenance and repair of the poly(A) tail, an element required for replication of the viral genome. This is Polyprotein P1234 from Aura virus (AURAV).